A 490-amino-acid polypeptide reads, in one-letter code: Bifunctional dihydrocamalexate synthase/camalexin synthase (490 aa).

The helical transmembrane segment at 1–21 threads the bilayer; it reads MSVFLCFLVLLPLILIFLNVL.

This sequence belongs to the cytochrome P450 family.

It localises to the membrane. The catalysed reaction is 2-(L-cystein-S-yl)-2-(1H-indol-3-yl)-acetonitrile + 2 reduced [NADPH--hemoprotein reductase] + 2 O2 = camalexin + hydrogen cyanide + 2 oxidized [NADPH--hemoprotein reductase] + CO2 + 4 H2O + 2 H(+). The enzyme catalyses 2-(L-cystein-S-yl)-2-(1H-indol-3-yl)-acetonitrile + reduced [NADPH--hemoprotein reductase] + O2 = (R)-dihydrocamalexate + hydrogen cyanide + oxidized [NADPH--hemoprotein reductase] + 2 H2O + 2 H(+). It carries out the reaction (R)-dihydrocamalexate + reduced [NADPH--hemoprotein reductase] + O2 = camalexin + oxidized [NADPH--hemoprotein reductase] + CO2 + 2 H2O. In terms of biological role, multifunctional enzyme involved in the biosynthesis of the indole-derived phytoalexin camalexin. Catalyzes two reactions, the formation of dihydrocamalexate from indole-3-acetonitrile-cysteine conjugate and the oxidative decarboxylation of dihydrocamalexate which is the final step in camalexin biosynthesis. Required for the resistance to the fungal pathogens A.brassicicola, B.cinerea, B.elliptica, B.tulipae, L.maculans and Colletotrichum higginsianum. Seems not to be required for resistance to P.syringae, P.porri, and not involved in age-related resistance. The sequence is that of Bifunctional dihydrocamalexate synthase/camalexin synthase (CYP71B15) from Arabidopsis thaliana (Mouse-ear cress).